The following is a 214-amino-acid chain: 3-isopropylmalate dehydratase small subunit (214 aa).

The protein belongs to the LeuD family. LeuD type 1 subfamily. As to quaternary structure, heterodimer of LeuC and LeuD.

It carries out the reaction (2R,3S)-3-isopropylmalate = (2S)-2-isopropylmalate. Its pathway is amino-acid biosynthesis; L-leucine biosynthesis; L-leucine from 3-methyl-2-oxobutanoate: step 2/4. Catalyzes the isomerization between 2-isopropylmalate and 3-isopropylmalate, via the formation of 2-isopropylmaleate. This chain is 3-isopropylmalate dehydratase small subunit, found in Pseudomonas putida (strain ATCC 47054 / DSM 6125 / CFBP 8728 / NCIMB 11950 / KT2440).